Here is a 239-residue protein sequence, read N- to C-terminus: Proteasome subunit beta type-6 (239 aa).

Ala2 is subject to N-acetylalanine. Residues 2–34 constitute a propeptide, removed in mature form; that stretch reads AATLVAARGTRPAPAWGPEAIAPDWENREVSTG. Thr35 serves as the catalytic Nucleophile. The residue at position 69 (Thr69) is a Phosphothreonine.

Belongs to the peptidase T1B family. As to quaternary structure, the 26S proteasome consists of a 20S proteasome core and two 19S regulatory subunits. The 20S proteasome core is a barrel-shaped complex made of 28 subunits that are arranged in four stacked rings. The two outer rings are each formed by seven alpha subunits, and the two inner rings are formed by seven beta subunits. The proteolytic activity is exerted by three beta-subunits PSMB5, PSMB6 and PSMB7.

The protein resides in the cytoplasm. The protein localises to the nucleus. The catalysed reaction is Cleavage of peptide bonds with very broad specificity.. Its function is as follows. Component of the 20S core proteasome complex involved in the proteolytic degradation of most intracellular proteins. This complex plays numerous essential roles within the cell by associating with different regulatory particles. Associated with two 19S regulatory particles, forms the 26S proteasome and thus participates in the ATP-dependent degradation of ubiquitinated proteins. The 26S proteasome plays a key role in the maintenance of protein homeostasis by removing misfolded or damaged proteins that could impair cellular functions, and by removing proteins whose functions are no longer required. Associated with the PA200 or PA28, the 20S proteasome mediates ubiquitin-independent protein degradation. This type of proteolysis is required in several pathways including spermatogenesis (20S-PA200 complex) or generation of a subset of MHC class I-presented antigenic peptides (20S-PA28 complex). Within the 20S core complex, PSMB6 displays a peptidylglutamyl-hydrolyzing activity also termed postacidic or caspase-like activity, meaning that the peptides bond hydrolysis occurs directly after acidic residues. In Bos taurus (Bovine), this protein is Proteasome subunit beta type-6 (PSMB6).